A 346-amino-acid polypeptide reads, in one-letter code: Phenylalanine--tRNA ligase alpha subunit (346 aa).

E264 serves as a coordination point for Mg(2+).

It belongs to the class-II aminoacyl-tRNA synthetase family. Phe-tRNA synthetase alpha subunit type 1 subfamily. As to quaternary structure, tetramer of two alpha and two beta subunits. Mg(2+) serves as cofactor.

Its subcellular location is the cytoplasm. It catalyses the reaction tRNA(Phe) + L-phenylalanine + ATP = L-phenylalanyl-tRNA(Phe) + AMP + diphosphate + H(+). The chain is Phenylalanine--tRNA ligase alpha subunit from Leifsonia xyli subsp. xyli (strain CTCB07).